The sequence spans 142 residues: Large ribosomal subunit protein uL13 (142 aa).

Belongs to the universal ribosomal protein uL13 family. As to quaternary structure, part of the 50S ribosomal subunit.

Its function is as follows. This protein is one of the early assembly proteins of the 50S ribosomal subunit, although it is not seen to bind rRNA by itself. It is important during the early stages of 50S assembly. This Shewanella baltica (strain OS223) protein is Large ribosomal subunit protein uL13.